Here is a 480-residue protein sequence, read N- to C-terminus: Probable glycosyltransferase At5g25310 (480 aa).

Residues 1–10 lie on the Cytoplasmic side of the membrane; sequence MDKFQSKFTR. The helical; Signal-anchor for type II membrane protein transmembrane segment at 11-31 threads the bilayer; that stretch reads FGFISICFGSIALVLLISHCS. Residues 32 to 480 lie on the Lumenal side of the membrane; it reads TSFFDYSFQK…WLRRLNLKLT (449 aa). N-linked (GlcNAc...) asparagine glycosylation is found at N85, N120, N243, N271, and N281.

Belongs to the glycosyltransferase 47 family.

Its subcellular location is the golgi apparatus membrane. May be involved in cell wall biosynthesis. In Arabidopsis thaliana (Mouse-ear cress), this protein is Probable glycosyltransferase At5g25310.